The sequence spans 645 residues: Glucans biosynthesis glucosyltransferase H (645 aa).

The span at 1-13 (MDGTVTPSPTTTA) shows a compositional bias: polar residues. A disordered region spans residues 1–32 (MDGTVTPSPTTTAMPPVSALDAGTPTLPPEAP). A run of 7 helical transmembrane segments spans residues 64-84 (LIGG…SVLW), 98-118 (LFVL…AGFV), 423-443 (APMW…GGGI), 465-485 (AIWI…LGYI), 504-524 (AVSI…VMYL), 559-579 (YGGL…VSPA), and 580-600 (LAAW…VVAL).

It belongs to the glycosyltransferase 2 family. OpgH subfamily.

The protein localises to the cell inner membrane. It functions in the pathway glycan metabolism; osmoregulated periplasmic glucan (OPG) biosynthesis. Involved in the biosynthesis of osmoregulated periplasmic glucans (OPGs). This chain is Glucans biosynthesis glucosyltransferase H, found in Xanthomonas euvesicatoria pv. vesicatoria (strain 85-10) (Xanthomonas campestris pv. vesicatoria).